A 464-amino-acid chain; its full sequence is Argininosuccinate lyase (464 aa).

It belongs to the lyase 1 family. Argininosuccinate lyase subfamily.

It is found in the cytoplasm. It carries out the reaction 2-(N(omega)-L-arginino)succinate = fumarate + L-arginine. Its pathway is amino-acid biosynthesis; L-arginine biosynthesis; L-arginine from L-ornithine and carbamoyl phosphate: step 3/3. This is Argininosuccinate lyase from Frankia casuarinae (strain DSM 45818 / CECT 9043 / HFP020203 / CcI3).